The chain runs to 648 residues: Shugoshin (648 aa).

2 coiled-coil regions span residues 95 to 122 (LMIK…RLSV) and 208 to 273 (DDRA…KDEA). 5 disordered regions span residues 188 to 239 (KVVG…RSSR), 262 to 334 (EADK…QEDA), 367 to 443 (VYRD…RPRR), 483 to 518 (TNRK…AAED), and 628 to 648 (HRAR…KVST). Composition is skewed to basic and acidic residues over residues 200 to 217 (VRGE…HQEA) and 262 to 273 (EADKSRSAKDEA). Polar residues predominate over residues 306-315 (ASGTLTQSNE). Composition is skewed to basic and acidic residues over residues 424–440 (IVVD…DATR) and 490–509 (QREG…HEQD).

Belongs to the shugoshin family.

The protein resides in the nucleus. It is found in the chromosome. The protein localises to the centromere. Plays a central role in chromosome cohesion during cell division by preventing premature dissociation of cohesin complex from centromeres after prophase, when most of cohesin complex dissociates from chromosomes arms. May act by protecting RAD21 and or REC8 from cleavage by ESP1/separase. In Eremothecium gossypii (strain ATCC 10895 / CBS 109.51 / FGSC 9923 / NRRL Y-1056) (Yeast), this protein is Shugoshin (SGO1).